The following is a 195-amino-acid chain: Imidazoleglycerol-phosphate dehydratase (195 aa).

This sequence belongs to the imidazoleglycerol-phosphate dehydratase family.

It is found in the cytoplasm. The catalysed reaction is D-erythro-1-(imidazol-4-yl)glycerol 3-phosphate = 3-(imidazol-4-yl)-2-oxopropyl phosphate + H2O. The protein operates within amino-acid biosynthesis; L-histidine biosynthesis; L-histidine from 5-phospho-alpha-D-ribose 1-diphosphate: step 6/9. In Geobacter sulfurreducens (strain ATCC 51573 / DSM 12127 / PCA), this protein is Imidazoleglycerol-phosphate dehydratase.